The following is a 597-amino-acid chain: Zinc finger CCCH domain-containing protein 29 (597 aa).

ANK repeat units lie at residues 76–106 and 111–143; these read EERT…DVNR and EKVT…SPNC. C3H1-type zinc fingers lie at residues 254-281 and 289-313; these read PYTC…HGVF and QYRT…HRRD. Residues 320-337 show a composition bias toward polar residues; it reads ASTGSAMVSPRSSNQSPE. Residues 320–341 are disordered; it reads ASTGSAMVSPRSSNQSPEMSVM.

Expressed in roots and anthers.

The protein localises to the nucleus. In terms of biological role, involved in salt stress response. May positively modulate plant tolerance to salt stress. The protein is Zinc finger CCCH domain-containing protein 29 of Arabidopsis thaliana (Mouse-ear cress).